The chain runs to 687 residues: ERI1 exoribonuclease 2 (687 aa).

Residues 38–226 (LIIIDFESTC…DDSRNTAKLA (189 aa)) form the Exonuclease domain. The Mg(2+) site is built by D42, E44, and D156. E44 functions as the Proton acceptor in the catalytic mechanism. E44 serves as a coordination point for AMP. H213 functions as the Proton acceptor in the catalytic mechanism. H213 contacts AMP. Position 218 (D218) interacts with Mg(2+). Residues C595, C597, C620, and C633 each coordinate Zn(2+). The GRF-type zinc finger occupies 595-642 (CNCGRRAKRLTVSNAGPNQGKAFYTCSVKKRNEENKKGCDYFKWEQTV).

Belongs to the ERI2 family. The cofactor is Mg(2+).

In Xenopus laevis (African clawed frog), this protein is ERI1 exoribonuclease 2 (eri2).